A 381-amino-acid polypeptide reads, in one-letter code: Arginine biosynthesis bifunctional protein ArgJ (381 aa).

Substrate contacts are provided by Thr143, Lys165, Thr176, Glu255, Asn376, and Thr381. Thr176 serves as the catalytic Nucleophile.

This sequence belongs to the ArgJ family. As to quaternary structure, heterotetramer of two alpha and two beta chains.

The protein localises to the cytoplasm. The enzyme catalyses N(2)-acetyl-L-ornithine + L-glutamate = N-acetyl-L-glutamate + L-ornithine. The catalysed reaction is L-glutamate + acetyl-CoA = N-acetyl-L-glutamate + CoA + H(+). It functions in the pathway amino-acid biosynthesis; L-arginine biosynthesis; L-ornithine and N-acetyl-L-glutamate from L-glutamate and N(2)-acetyl-L-ornithine (cyclic): step 1/1. The protein operates within amino-acid biosynthesis; L-arginine biosynthesis; N(2)-acetyl-L-ornithine from L-glutamate: step 1/4. Functionally, catalyzes two activities which are involved in the cyclic version of arginine biosynthesis: the synthesis of N-acetylglutamate from glutamate and acetyl-CoA as the acetyl donor, and of ornithine by transacetylation between N(2)-acetylornithine and glutamate. In Thermus thermophilus (strain ATCC BAA-163 / DSM 7039 / HB27), this protein is Arginine biosynthesis bifunctional protein ArgJ.